The primary structure comprises 354 residues: Guanine nucleotide-binding protein G(i) subunit alpha-1 (354 aa).

The N-myristoyl glycine moiety is linked to residue Gly2. The S-palmitoyl cysteine moiety is linked to residue Cys3. The 323-residue stretch at 32–354 (REVKLLLLGA…KNNLKDCGLF (323 aa)) folds into the G-alpha domain. Residues 35–48 (KLLLLGAGESGKST) form a G1 motif region. GTP is bound by residues 43-48 (ESGKST), 150-151 (DS), and 175-178 (LRTR). Position 47 (Ser47) interacts with Mg(2+). Positions 173-181 (DVLRTRVKT) are G2 motif. Residue Thr181 coordinates Mg(2+). A G3 motif region spans residues 196 to 205 (FKMFDVGGQR). GTP contacts are provided by residues 200–204 (DVGGQ), 269–272 (NKKD), and Ala326. The segment at 265-272 (ILFLNKKD) is G4 motif. Residues 324–329 (TCATDT) form a G5 motif region.

Belongs to the G-alpha family. G(i/o/t/z) subfamily. In terms of assembly, heterotrimeric G proteins are composed of 3 units; alpha, beta and gamma. The alpha chain contains the guanine nucleotide binding site. Part of a spindle orientation complex at least composed of GNAI1, GPSM2 and NUMA1. Identified in complex with the beta subunit GNB1 and the gamma subunit GNG1. Identified in complex with the beta subunit GNB1 and the gamma subunit GNG2. Component of the TAS2R14-GNAI1 complex, consisting of TAS2R14, GNAI1, GNB1 and GNG2; within the complex interacts with TAS2R14; this complex plays a role in the perception of bitterness. GTP binding causes dissociation of the heterotrimer, liberating the individual subunits so that they can interact with downstream effector proteins. Interacts (GDP-bound form) with GPSM1; this inhibits guanine nucleotide exchange and GTP binding. Interacts (GDP-bound form) with GPSM2 (via GoLoco domains); this inhibits guanine nucleotide exchange. Interacts with RGS10; this strongly enhances GTP hydrolysis. Interacts with RGS1 and RGS16. Interacts with RGS4. Interacts with RGS12. Interacts (via active GTP- or inactive GDP-bound forms) with RGS14 (via RGS and GoLoco domains). Interacts with RGS3, RGS6, RGS7, RGS8, RGS17, RGS18 and RGS20 (in vitro). Interacts (GDP-bound form) with RIC8A (via C-terminus); promoting GNAI1 folding and association with the plasma membrane. Interacts (inactive GDP-bound form) with NUCB1 (via GBA motif); the interaction leads to activation of GNAI1. Interacts (inactive GDP-bound form) with CCDC88C/DAPLE (via GBA motif); the interaction leads to activation of GNAI1. Interacts (inactive GDP-bound form) with CCDC8A/GIV (via GBA motif). Interacts with GPR15. Post-translationally, myristoylation at Gly-2 is required for membrane anchoring before palmitoylation. Palmitoylation at Cys-3 varies with membrane lipid composition.

It is found in the nucleus. It localises to the cytoplasm. The protein resides in the cell membrane. Its subcellular location is the cytoskeleton. The protein localises to the microtubule organizing center. It is found in the centrosome. It localises to the cell cortex. The protein resides in the membrane. It catalyses the reaction GTP + H2O = GDP + phosphate + H(+). Functionally, guanine nucleotide-binding proteins (G proteins) function as transducers downstream of G protein-coupled receptors (GPCRs) in numerous signaling cascades. The alpha chain contains the guanine nucleotide binding site and alternates between an active, GTP-bound state and an inactive, GDP-bound state. Signaling by an activated GPCR promotes GDP release and GTP binding. The alpha subunit has a low GTPase activity that converts bound GTP to GDP, thereby terminating the signal. Both GDP release and GTP hydrolysis are modulated by numerous regulatory proteins. Signaling is mediated via effector proteins, such as adenylate cyclase. Inhibits adenylate cyclase activity of ADCY1, ADCY5 and ADCY6, leading to decreased intracellular cAMP levels. The inactive GDP-bound form prevents the association of RGS14 with centrosomes and is required for the translocation of RGS14 from the cytoplasm to the plasma membrane. Required for normal cytokinesis during mitosis. Required for cortical dynein-dynactin complex recruitment during metaphase. In Rattus norvegicus (Rat), this protein is Guanine nucleotide-binding protein G(i) subunit alpha-1 (Gnai1).